A 2109-amino-acid chain; its full sequence is Nonribosomal peptide synthetase sidE (2109 aa).

The segment at 31–512 (LTPPSPPCLV…QNGKVDFRAI (482 aa)) is adenylation 1. Positions 537–613 (AGLSETASKI…EIADTVQLDS (77 aa)) constitute a Carrier 1 domain. S574 carries the post-translational modification O-(pantetheine 4'-phosphoryl)serine. Positions 646-908 (DAYPVTALQE…LAVVPYAIAI (263 aa)) are condensation 1. Residues 1058 to 1555 (RTLNGQFEAT…GKANRKQLKA (498 aa)) form an adenylation 2 region. The Carrier 2 domain maps to 1584–1660 (PLASETQKVL…AMADQLKGES (77 aa)). At S1621 the chain carries O-(pantetheine 4'-phosphoryl)serine. Positions 1695-1968 (YPCPPGQAEF…NFLPMRSKVD (274 aa)) are condensation 2.

This sequence belongs to the NRP synthetase family.

It functions in the pathway siderophore biosynthesis. Functionally, nonribosomal peptide synthetase; part of the siderophore biosynthetic pathway. Aspergillus fumigatus produces four types of siderophores, low-molecular-mass iron chelators, including excreted fusarinine C (FsC) and triacetylfusarinine C (TAFC) for iron uptake and intacellular ferricrocin (FC) for hyphal and hydroxyferricrocin (HFC) for conidial iron distribution and storage. TAFC consists of three N(2)-acetyl-N(5)-anhydromevalonyl-N(5)-hydroxyornithine residues cyclically linked by ester bonds; FC is a cyclic hexapeptide with the structure Gly-Ser-Gly-(N(5)-acetyl-N(5)-hydroxyornithine)x3. The biosynthesis of all four siderophores depends on the hydroxylation of ornithine, catalyzed by the monooxygenase sidA. Subsequently, the pathways for biosynthesis of extra- and intracellular siderophores split. For biosynthesis of extracellular siderophores, the transacylase sidF transfers anhydromevalonyl to N(5)-hydroxyornithine. The required anhydromevalonyl-CoA moiety is derived from mevalonate by CoA ligation and dehydration catalyzed by sidI and sidH respectively. The acetylation of N(5)-hydroxyornithine for FC biosynthesis involves the constitutively expressed sidL. FC is hydroxylated to HFC by an as yet uncharacterized enzyme during conidiation. Assembly of fusarinine C (FsC) and FC is catalyzed by two different nonribosomal peptide synthetases (NRPS), sidD and sidC respectively. Subsequently, sidG catalyzes N2-acetylation of FsC for forming TAFC. Both extra- and intracellular siderophores are crucial for growth during iron limitation and virulence. The polypeptide is Nonribosomal peptide synthetase sidE (Aspergillus fumigatus (strain ATCC MYA-4609 / CBS 101355 / FGSC A1100 / Af293) (Neosartorya fumigata)).